Reading from the N-terminus, the 174-residue chain is Crossover junction endodeoxyribonuclease RuvC (174 aa).

Residues Asp-8, Glu-68, and Asp-140 contribute to the active site. Residues Asp-8, Glu-68, and Asp-140 each coordinate Mg(2+).

The protein belongs to the RuvC family. As to quaternary structure, homodimer which binds Holliday junction (HJ) DNA. The HJ becomes 2-fold symmetrical on binding to RuvC with unstacked arms; it has a different conformation from HJ DNA in complex with RuvA. In the full resolvosome a probable DNA-RuvA(4)-RuvB(12)-RuvC(2) complex forms which resolves the HJ. Requires Mg(2+) as cofactor.

The protein resides in the cytoplasm. The catalysed reaction is Endonucleolytic cleavage at a junction such as a reciprocal single-stranded crossover between two homologous DNA duplexes (Holliday junction).. The RuvA-RuvB-RuvC complex processes Holliday junction (HJ) DNA during genetic recombination and DNA repair. Endonuclease that resolves HJ intermediates. Cleaves cruciform DNA by making single-stranded nicks across the HJ at symmetrical positions within the homologous arms, yielding a 5'-phosphate and a 3'-hydroxyl group; requires a central core of homology in the junction. The consensus cleavage sequence is 5'-(A/T)TT(C/G)-3'. Cleavage occurs on the 3'-side of the TT dinucleotide at the point of strand exchange. HJ branch migration catalyzed by RuvA-RuvB allows RuvC to scan DNA until it finds its consensus sequence, where it cleaves and resolves the cruciform DNA. The sequence is that of Crossover junction endodeoxyribonuclease RuvC from Legionella pneumophila subsp. pneumophila (strain Philadelphia 1 / ATCC 33152 / DSM 7513).